The primary structure comprises 156 residues: Ribosomal RNA large subunit methyltransferase H (156 aa).

S-adenosyl-L-methionine-binding positions include Leu-72, Gly-104, and Leu-123 to Leu-128.

Belongs to the RNA methyltransferase RlmH family. As to quaternary structure, homodimer.

The protein resides in the cytoplasm. The catalysed reaction is pseudouridine(1915) in 23S rRNA + S-adenosyl-L-methionine = N(3)-methylpseudouridine(1915) in 23S rRNA + S-adenosyl-L-homocysteine + H(+). In terms of biological role, specifically methylates the pseudouridine at position 1915 (m3Psi1915) in 23S rRNA. The sequence is that of Ribosomal RNA large subunit methyltransferase H from Syntrophotalea carbinolica (strain DSM 2380 / NBRC 103641 / GraBd1) (Pelobacter carbinolicus).